We begin with the raw amino-acid sequence, 443 residues long: Tubulin epsilon and delta complex protein 2 (443 aa).

A coiled-coil region spans residues 8 to 33 (RRLVAELRDALDSCAERQRQLEQSLR). Disordered stretches follow at residues 45–72 (AETPAPEPTPGSEINKEAPSSACPPSPQ) and 93–146 (GLSK…PWVP). The segment covering 106–124 (LKSGSASTATKASAPPSTS) has biased composition (low complexity).

Interacts with TEDC1. Found in a complex with TEDC1, TEDC2, TUBE1 and TUBD1.

It is found in the cell projection. Its subcellular location is the cilium. The protein resides in the cytoplasm. The protein localises to the cytoskeleton. It localises to the microtubule organizing center. It is found in the centrosome. Its subcellular location is the centriole. Functionally, acts as a positive regulator of ciliary hedgehog signaling. Required for centriole stability. The protein is Tubulin epsilon and delta complex protein 2 of Bos taurus (Bovine).